The primary structure comprises 75 residues: Exodeoxyribonuclease 7 small subunit (75 aa).

It belongs to the XseB family. In terms of assembly, heterooligomer composed of large and small subunits.

The protein localises to the cytoplasm. It carries out the reaction Exonucleolytic cleavage in either 5'- to 3'- or 3'- to 5'-direction to yield nucleoside 5'-phosphates.. In terms of biological role, bidirectionally degrades single-stranded DNA into large acid-insoluble oligonucleotides, which are then degraded further into small acid-soluble oligonucleotides. This Chlamydia felis (strain Fe/C-56) (Chlamydophila felis) protein is Exodeoxyribonuclease 7 small subunit.